Consider the following 396-residue polypeptide: Tyrosine--tRNA ligase (396 aa).

A 'HIGH' region motif is present at residues 39–48 (PTAPDLHLGH). Residues 223-227 (KMSKS) carry the 'KMSKS' region motif. Residue K226 coordinates ATP. Positions 334-395 (LPVPQLLKQA…GKRKFARVTV (62 aa)) constitute an S4 RNA-binding domain.

This sequence belongs to the class-I aminoacyl-tRNA synthetase family. TyrS type 2 subfamily. In terms of assembly, homodimer.

The protein localises to the cytoplasm. It catalyses the reaction tRNA(Tyr) + L-tyrosine + ATP = L-tyrosyl-tRNA(Tyr) + AMP + diphosphate + H(+). Its function is as follows. Catalyzes the attachment of tyrosine to tRNA(Tyr) in a two-step reaction: tyrosine is first activated by ATP to form Tyr-AMP and then transferred to the acceptor end of tRNA(Tyr). The chain is Tyrosine--tRNA ligase from Thiobacillus denitrificans (strain ATCC 25259 / T1).